The chain runs to 524 residues: Alkaline phosphatase, tissue-nonspecific isozyme (524 aa).

Positions methionine 1–serine 17 are cleaved as a signal peptide. Aspartate 60 serves as a coordination point for Mg(2+). Zn(2+)-binding residues include aspartate 60 and serine 110. Serine 110 acts as the Phosphoserine intermediate in catalysis. Serine 110 bears the Phosphoserine mark. Cysteines 139 and 201 form a disulfide. A glycan (N-linked (GlcNAc...) asparagine) is linked at asparagine 140. A Mg(2+)-binding site is contributed by threonine 173. Asparagine 230 carries N-linked (GlcNAc...) asparagine glycosylation. A Ca(2+)-binding site is contributed by glutamate 235. Asparagine 271 carries an N-linked (GlcNAc...) asparagine glycan. The Ca(2+) site is built by phenylalanine 290 and glutamate 291. Residue asparagine 302 is glycosylated (N-linked (GlcNAc...) asparagine). Position 306 (aspartate 306) interacts with Ca(2+). Glutamate 332 is a binding site for Mg(2+). Zn(2+) contacts are provided by aspartate 337, histidine 341, aspartate 378, and histidine 379. Asparagine 430 is a glycosylation site (N-linked (GlcNAc...) asparagine). Histidine 454 provides a ligand contact to Zn(2+). An intrachain disulfide couples cysteine 489 to cysteine 497. Serine 499 is lipidated: GPI-anchor amidated serine. Positions alanine 500–phenylalanine 524 are cleaved as a propeptide — removed in mature form.

This sequence belongs to the alkaline phosphatase family. In terms of assembly, homodimer. The cofactor is Mg(2+). Requires Zn(2+) as cofactor. Ca(2+) is required as a cofactor. In terms of processing, N-glycosylated.

It localises to the cell membrane. It is found in the extracellular vesicle membrane. Its subcellular location is the mitochondrion membrane. The protein resides in the mitochondrion intermembrane space. It carries out the reaction a phosphate monoester + H2O = an alcohol + phosphate. The catalysed reaction is diphosphate + H2O = 2 phosphate + H(+). The enzyme catalyses pyridoxal 5'-phosphate + H2O = pyridoxal + phosphate. It catalyses the reaction phosphoethanolamine + H2O = ethanolamine + phosphate. It carries out the reaction N-phosphocreatine + H2O = creatine + phosphate. The catalysed reaction is ATP + H2O = ADP + phosphate + H(+). The enzyme catalyses ADP + H2O = AMP + phosphate + H(+). It catalyses the reaction AMP + H2O = adenosine + phosphate. With respect to regulation, phosphatase activity is specifically inhibited by 5-((5-chloro-2-methoxyphenyl)sulfonamido)nicotinamide (SBI-425). In terms of biological role, alkaline phosphatase that metabolizes various phosphate compounds and plays a key role in skeletal mineralization and adaptive thermogenesis. Has broad substrate specificity and can hydrolyze a considerable variety of compounds: however, only a few substrates, such as diphosphate (inorganic pyrophosphate; PPi), pyridoxal 5'-phosphate (PLP) and N-phosphocreatine are natural substrates. Plays an essential role in skeletal and dental mineralization via its ability to hydrolyze extracellular diphosphate, a potent mineralization inhibitor, to phosphate: it thereby promotes hydroxyapatite crystal formation and increases inorganic phosphate concentration. Acts in a non-redundant manner with PHOSPHO1 in skeletal mineralization: while PHOSPHO1 mediates the initiation of hydroxyapatite crystallization in the matrix vesicles (MVs), ALPL/TNAP catalyzes the spread of hydroxyapatite crystallization in the extracellular matrix. Also promotes dephosphorylation of osteopontin (SSP1), an inhibitor of hydroxyapatite crystallization in its phosphorylated state; it is however unclear whether ALPL/TNAP mediates SSP1 dephosphorylation via a direct or indirect manner. Catalyzes dephosphorylation of PLP to pyridoxal (PL), the transportable form of vitamin B6, in order to provide a sufficient amount of PLP in the brain, an essential cofactor for enzymes catalyzing the synthesis of diverse neurotransmitters. Additionally, also able to mediate ATP degradation in a stepwise manner to adenosine, thereby regulating the availability of ligands for purinergic receptors. Also capable of dephosphorylating microbial products, such as lipopolysaccharides (LPS) as well as other phosphorylated small-molecules, such as poly-inosine:cytosine (poly I:C). Acts as a key regulator of adaptive thermogenesis as part of the futile creatine cycle: localizes to the mitochondria of thermogenic fat cells and acts by mediating hydrolysis of N-phosphocreatine to initiate a futile cycle of creatine dephosphorylation and phosphorylation. During the futile creatine cycle, creatine and N-phosphocreatine are in a futile cycle, which dissipates the high energy charge of N-phosphocreatine as heat without performing any mechanical or chemical work. This Felis catus (Cat) protein is Alkaline phosphatase, tissue-nonspecific isozyme (ALPL).